The sequence spans 831 residues: MISGRVLYRPAGRRGVGPLPLAATTYALRRRSPSITALGQPRRLIRRWESTSGAVGSDNSGHIDTQPNESILFFDNIFPLKLSSVLLWRAWETNELLRRFNSASLSFLDPIGLVKRAIPESAPIKVTEIIPRLKEGGAYVKFTYPDSISPADIEDQLVKYHEKTPIKPWFNPFRTIKSRLVLGRPWLEDLYRLPKSRLKIEFVPAKNSEPPTELSQESLYSLFRRYGKISDITSQAPDSKVLPKFAYVDFVLVRDAILARNCIHGFVLQEEGSKSLTRLRLSYEQRVKAHHIWNWVTGHPRIVIPVIAAFLAAFTVAVFDPIREFFVKRQTSDILAFRKRGDDDAGLSALFTHRKDLIDSIQNNLLETVGTFIVVQGPRGSGGRELVMDQVLEGRRDVLVVDCRQVVEARGEAGTIRKLANQVGYRPVFSWANNLSSMVDLAIQSTTGVKAGFSENLESQVTKILQTTAEALKDVSLARRKRDKDANLTDDAYLEAHPERRPVIVIDNFLHKSEEKGIVYDKISDWASALVQANIAHVIFLTTDTSYSKPLSKALPDRVFHQITLGDLTPEVAKHFVVSQLETDEDADEKKNGASPAISERKLRRDLQELDECIDALGGRLTDLQVLARRLKVGQSPKKAVSDIIDQSASEILRMFLLTNKGAGSGDKKWSTEQAWYLIKQIASKESLRYNEVLLSDTFASSTTADASNAEAALESLANAELVTIKSHHGRPATIRAGKPVYQAAFNRLLDDAVVNARMDLAVLTELAKIEAKKIDKAEGELSVLGSLPSQPYQTADRVNYLLAKLQGSQEKIVAYEKEMAGLKKVLSEEA.

The transit peptide at Met-1 to Trp-48 directs the protein to the mitochondrion. Residues Glu-49–Arg-301 lie on the Mitochondrial matrix side of the membrane. Positions Ser-196 to Arg-286 constitute an RRM domain. A helical membrane pass occupies residues Ile-302–Ile-322. The Mitochondrial intermembrane segment spans residues Arg-323–Ala-831.

The protein belongs to the YME2 family.

The protein resides in the mitochondrion inner membrane. In terms of biological role, plays a role in maintaining the mitochondrial genome and in controlling the mtDNA escape. Involved in the regulation of mtDNA nucleotide structure and number. May have a dispensable role in early maturation of pre-rRNA. The sequence is that of Mitochondrial escape protein 2 (YME2) from Chaetomium globosum (strain ATCC 6205 / CBS 148.51 / DSM 1962 / NBRC 6347 / NRRL 1970) (Soil fungus).